Here is a 320-residue protein sequence, read N- to C-terminus: Cytochrome f (320 aa).

Residues 1 to 35 (MQTRNAFSWLKKQITRSISVSLMIYILTRTSISSA) form the signal peptide. Positions 36, 56, 59, and 60 each coordinate heme. The helical transmembrane segment at 286 to 306 (VQGLLFFLASVILAQIFLVLK) threads the bilayer.

It belongs to the cytochrome f family. As to quaternary structure, the 4 large subunits of the cytochrome b6-f complex are cytochrome b6, subunit IV (17 kDa polypeptide, petD), cytochrome f and the Rieske protein, while the 4 small subunits are PetG, PetL, PetM and PetN. The complex functions as a dimer. Requires heme as cofactor.

The protein localises to the plastid. The protein resides in the chloroplast thylakoid membrane. Functionally, component of the cytochrome b6-f complex, which mediates electron transfer between photosystem II (PSII) and photosystem I (PSI), cyclic electron flow around PSI, and state transitions. This Solanum bulbocastanum (Wild potato) protein is Cytochrome f.